Consider the following 142-residue polypeptide: Protein E6 (142 aa).

2 zinc fingers span residues 27 to 63 (CIFC…CTKC) and 100 to 136 (CQHC…CRNC).

This sequence belongs to the papillomaviridae E6 protein family. In terms of assembly, forms homodimers. Interacts with ubiquitin-protein ligase UBE3A/E6-AP; this interaction stimulates UBE3A ubiquitin activity. Interacts with host BAK1.

It is found in the host cytoplasm. It localises to the host nucleus. Its function is as follows. Plays a major role in the induction and maintenance of cellular transformation. E6 associates with host UBE3A/E6-AP ubiquitin-protein ligase and modulates its activity. Protects host keratinocytes from apoptosis by mediating the degradation of host BAK1. May also inhibit host immune response. The sequence is that of Protein E6 from Homo sapiens (Human).